The primary structure comprises 377 residues: 3-dehydroquinate synthase (377 aa).

NAD(+)-binding positions include 115–119 (GVIGD), 139–140 (TS), Lys-152, and Lys-161. Zn(2+)-binding residues include Glu-194, His-256, and His-275.

It belongs to the sugar phosphate cyclases superfamily. Dehydroquinate synthase family. NAD(+) is required as a cofactor. It depends on Co(2+) as a cofactor. Requires Zn(2+) as cofactor.

The protein resides in the cytoplasm. The enzyme catalyses 7-phospho-2-dehydro-3-deoxy-D-arabino-heptonate = 3-dehydroquinate + phosphate. It participates in metabolic intermediate biosynthesis; chorismate biosynthesis; chorismate from D-erythrose 4-phosphate and phosphoenolpyruvate: step 2/7. Its function is as follows. Catalyzes the conversion of 3-deoxy-D-arabino-heptulosonate 7-phosphate (DAHP) to dehydroquinate (DHQ). This chain is 3-dehydroquinate synthase, found in Rhizobium meliloti (strain 1021) (Ensifer meliloti).